Reading from the N-terminus, the 122-residue chain is Large ribosomal subunit protein bL12 (122 aa).

The protein belongs to the bacterial ribosomal protein bL12 family. As to quaternary structure, homodimer. Part of the ribosomal stalk of the 50S ribosomal subunit. Forms a multimeric L10(L12)X complex, where L10 forms an elongated spine to which 2 to 4 L12 dimers bind in a sequential fashion. Binds GTP-bound translation factors.

Functionally, forms part of the ribosomal stalk which helps the ribosome interact with GTP-bound translation factors. Is thus essential for accurate translation. The chain is Large ribosomal subunit protein bL12 from Sulfurimonas denitrificans (strain ATCC 33889 / DSM 1251) (Thiomicrospira denitrificans (strain ATCC 33889 / DSM 1251)).